Consider the following 227-residue polypeptide: ATP synthase F(0) complex subunit a (227 aa).

The next 6 membrane-spanning stretches (helical) occupy residues 14-34 (LLGHPLILLSLLLPALLFPSP), 69-89 (WALMLTSLMTMLLTINLLGLL), 98-118 (QLSMNMALAFPLWLATLLTGL), 139-159 (IPALILIETTSLLIRPLALGV), 167-187 (AGHLLIQLISTASIALKPILP), and 190-210 (SILTMAILLLLTILEVAVAMI).

It belongs to the ATPase A chain family. Component of the ATP synthase complex composed at least of ATP5F1A/subunit alpha, ATP5F1B/subunit beta, ATP5MC1/subunit c (homooctomer), MT-ATP6/subunit a, MT-ATP8/subunit 8, ATP5ME/subunit e, ATP5MF/subunit f, ATP5MG/subunit g, ATP5MK/subunit k, ATP5MJ/subunit j, ATP5F1C/subunit gamma, ATP5F1D/subunit delta, ATP5F1E/subunit epsilon, ATP5PF/subunit F6, ATP5PB/subunit b, ATP5PD/subunit d, ATP5PO/subunit OSCP. ATP synthase complex consists of a soluble F(1) head domain (subunits alpha(3) and beta(3)) - the catalytic core - and a membrane F(0) domain - the membrane proton channel (subunits c, a, 8, e, f, g, k and j). These two domains are linked by a central stalk (subunits gamma, delta, and epsilon) rotating inside the F1 region and a stationary peripheral stalk (subunits F6, b, d, and OSCP). Interacts with DNAJC30; interaction is direct.

The protein resides in the mitochondrion inner membrane. The catalysed reaction is H(+)(in) = H(+)(out). Its function is as follows. Subunit a, of the mitochondrial membrane ATP synthase complex (F(1)F(0) ATP synthase or Complex V) that produces ATP from ADP in the presence of a proton gradient across the membrane which is generated by electron transport complexes of the respiratory chain. ATP synthase complex consist of a soluble F(1) head domain - the catalytic core - and a membrane F(1) domain - the membrane proton channel. These two domains are linked by a central stalk rotating inside the F(1) region and a stationary peripheral stalk. During catalysis, ATP synthesis in the catalytic domain of F(1) is coupled via a rotary mechanism of the central stalk subunits to proton translocation. With the subunit c (ATP5MC1), forms the proton-conducting channel in the F(0) domain, that contains two crucial half-channels (inlet and outlet) that facilitate proton movement from the mitochondrial intermembrane space (IMS) into the matrix. Protons are taken up via the inlet half-channel and released through the outlet half-channel, following a Grotthuss mechanism. In Anas platyrhynchos (Mallard), this protein is ATP synthase F(0) complex subunit a.